A 167-amino-acid chain; its full sequence is uncharacterized protein (167 aa).

It to A.aeolicus aq_328.

This is an uncharacterized protein from Aquifex aeolicus (strain VF5).